The sequence spans 596 residues: Interleukin-1 receptor-associated kinase 3 (596 aa).

Residues 41–106 form the Death domain; sequence WRGLAERLSS…RAIHLITNYG (66 aa). The residue at position 110 (Ser-110) is a Phosphoserine; by IRAK1. The region spanning 165–452 is the Protein kinase domain; that stretch reads FHKDFLIGEG…LESTQASLYF (288 aa). Residues 171–179, Lys-192, 295–298, and Asp-311 contribute to the ATP site; these read IGEGEIFEV and SSAN. Residue Ser-467 is modified to Phosphoserine. Positions 560–596 are disordered; the sequence is NIDPSSEAPGHSCRSRPVESSCSSKFSWDEYEQYKKE.

This sequence belongs to the protein kinase superfamily. TKL Ser/Thr protein kinase family. Pelle subfamily. In terms of assembly, monomer. Homodimer; disulfide-linked. May interact with IRAK4 (when phosphorylated). Interacts (when phosphorylated at Ser-110) with PIN1 (via WW domain) in response to IL33-mediated (but not TLR4 ligand LPS) dendritic cell stimulation. Expressed in eosinophils, dendritic cells and/or monocytes (at protein level). Expressed predominantly in peripheral blood lymphocytes.

The protein resides in the cytoplasm. Its subcellular location is the nucleus. In terms of biological role, putative inactive protein kinase which regulates signaling downstream of immune receptors including IL1R and Toll-like receptors. Inhibits dissociation of IRAK1 and IRAK4 from the Toll-like receptor signaling complex by either inhibiting the phosphorylation of IRAK1 and IRAK4 or stabilizing the receptor complex. Upon IL33-induced lung inflammation, positively regulates expression of IL6, CSF3, CXCL2 and CCL5 mRNAs in dendritic cells. This is Interleukin-1 receptor-associated kinase 3 from Homo sapiens (Human).